The primary structure comprises 314 residues: Putative thiamine biosynthesis protein HI_0357 (314 aa).

The protein belongs to the NMT1/THI5 family.

Functionally, probably involved in thiamine biosynthesis. The sequence is that of Putative thiamine biosynthesis protein HI_0357 from Haemophilus influenzae (strain ATCC 51907 / DSM 11121 / KW20 / Rd).